A 93-amino-acid chain; its full sequence is Aspartyl/glutamyl-tRNA(Asn/Gln) amidotransferase subunit C (93 aa).

Belongs to the GatC family. As to quaternary structure, heterotrimer of A, B and C subunits.

The enzyme catalyses L-glutamyl-tRNA(Gln) + L-glutamine + ATP + H2O = L-glutaminyl-tRNA(Gln) + L-glutamate + ADP + phosphate + H(+). It catalyses the reaction L-aspartyl-tRNA(Asn) + L-glutamine + ATP + H2O = L-asparaginyl-tRNA(Asn) + L-glutamate + ADP + phosphate + 2 H(+). Its function is as follows. Allows the formation of correctly charged Asn-tRNA(Asn) or Gln-tRNA(Gln) through the transamidation of misacylated Asp-tRNA(Asn) or Glu-tRNA(Gln) in organisms which lack either or both of asparaginyl-tRNA or glutaminyl-tRNA synthetases. The reaction takes place in the presence of glutamine and ATP through an activated phospho-Asp-tRNA(Asn) or phospho-Glu-tRNA(Gln). The chain is Aspartyl/glutamyl-tRNA(Asn/Gln) amidotransferase subunit C from Helicobacter pylori (strain HPAG1).